Here is a 164-residue protein sequence, read N- to C-terminus: Ubiquitin-fold modifier-conjugating enzyme 1 (164 aa).

The Glycyl thioester intermediate role is filled by Cys-116.

The protein belongs to the ubiquitin-conjugating enzyme family. UFC1 subfamily.

Functionally, E2-like enzyme which forms an intermediate with UFM1 via a thioester linkage. This chain is Ubiquitin-fold modifier-conjugating enzyme 1, found in Drosophila ananassae (Fruit fly).